The primary structure comprises 1704 residues: Arf-GAP with Rho-GAP domain, ANK repeat and PH domain-containing protein 2 (1704 aa).

An SAM domain is found at 6 to 70; sequence EVNVDIKDFL…LKQLQIILSK (65 aa). Tyrosine 77 bears the Phosphotyrosine mark. A disordered region spans residues 126–161; it reads NLEDSDASVERSQYPQSDDKLSPPKRDFPTAEEPHL. Residues 142–160 are compositionally biased toward basic and acidic residues; it reads SDDKLSPPKRDFPTAEEPH. PH domains are found at residues 482-574 and 587-679; these read KKVK…NALK and TPEK…QSIA. The 136-residue stretch at 676–811 folds into the Arf-GAP domain; sequence QSIAETLSDY…TLLASLTKEE (136 aa). Residues 700–723 form a C4-type zinc finger; it reads CADCKAPDPDWASINLCVVICKKC. 2 consecutive PH domains span residues 878-1003 and 1014-1114; these read DIHS…KHFV and DYDL…AGTD. One can recognise a Rho-GAP domain in the interval 1116-1297; sequence NALQDQQLSK…DLINNYVEIF (182 aa). The Ras-associating domain occupies 1326–1420; sequence GDLLIEVYVE…AYLVVKRFLT (95 aa). Residues 1434–1537 enclose the PH 5 domain; sequence GSIKEGILKI…WMTSIFIAQH (104 aa). Residue serine 1632 is modified to Phosphoserine. The segment at 1636 to 1675 is disordered; sequence LEDTEPEAPLGQPKGHKGLKTLRKTEDRNSKATLDSDHKL. Residues 1658-1675 are compositionally biased toward basic and acidic residues; the sequence is RKTEDRNSKATLDSDHKL.

As to expression, detected in brain, thymus, lymph node, thyroid, spinal cord, trachea, heart, skeletal muscle, spleen, kidney, liver, placenta, lung and peripheral blood leukocytes.

It is found in the cytoplasm. Phosphatidylinositol 3,4,5-trisphosphate-dependent GTPase-activating protein that modulates actin cytoskeleton remodeling by regulating ARF and RHO family members. Is activated by phosphatidylinositol 3,4,5-trisphosphate (PtdIns(3,4,5)P3) binding. Can be activated by phosphatidylinositol 3,4-bisphosphate (PtdIns(3,4,5)P2) binding, albeit with lower efficiency. The sequence is that of Arf-GAP with Rho-GAP domain, ANK repeat and PH domain-containing protein 2 (ARAP2) from Homo sapiens (Human).